The following is a 1142-amino-acid chain: ABC transporter F family member 4 (1142 aa).

A disordered region spans residues 1–564 (MGPKGKKKGQ…EDAFELAKKK (564 aa)). Low complexity-rich tracts occupy residues 121-143 (PQPVKKGGKPAPQKKGGKQQQQQ), 153-166 (PQPVKKGGKPAPQK), and 182-195 (PQPVKKGGKPAPQK). Acidic residues-rich tracts occupy residues 203–212 (SEDEDEEDEV) and 233–244 (EEEEEEEEEEIE). Composition is skewed to basic residues over residues 249-261 (KGGKAPKPKKGGK) and 280-290 (KGGKKDKKKGS). The segment covering 295 to 306 (EEEEEEEEEEIE) has biased composition (acidic residues). The segment covering 314-328 (NKKDQKKGGKGKHVE) has biased composition (basic and acidic residues). The span at 329–340 (EEEEEEEEEEIE) shows a compositional bias: acidic residues. Over residues 377 to 387 (KGGKKDKKKGS) the composition is skewed to basic residues. 2 stretches are compositionally biased toward acidic residues: residues 392-404 (EEEEEEEEEEEIE) and 441-451 (EEEEQEQEEEE). The span at 456–467 (SKSNKKDKKKGK) shows a compositional bias: basic residues. Residues 471–480 (EEEEEEEEEE) show a composition bias toward acidic residues. The segment covering 485–496 (SKSNKKDKKKGS) has biased composition (basic residues). Residues 501–518 (EEEEEEEEEEEEEKEEEE) show a composition bias toward acidic residues. Basic residues predominate over residues 530–548 (AKKVKKVDKKEKKKEKEKK). ABC transporter domains lie at 604–857 (IKFD…RSKE) and 923–1139 (LVFK…DNMV). Residues 636 to 643 (GRNGIGKS) and 956 to 963 (GMNGVGKS) contribute to the ATP site.

The protein belongs to the ABC transporter superfamily.

In Dictyostelium discoideum (Social amoeba), this protein is ABC transporter F family member 4 (abcF4).